The chain runs to 315 residues: Ribosomal RNA small subunit methyltransferase H (315 aa).

Residues 37-39, D57, F83, D105, and Q112 contribute to the S-adenosyl-L-methionine site; that span reads GGH.

Belongs to the methyltransferase superfamily. RsmH family.

Its subcellular location is the cytoplasm. It carries out the reaction cytidine(1402) in 16S rRNA + S-adenosyl-L-methionine = N(4)-methylcytidine(1402) in 16S rRNA + S-adenosyl-L-homocysteine + H(+). Specifically methylates the N4 position of cytidine in position 1402 (C1402) of 16S rRNA. The sequence is that of Ribosomal RNA small subunit methyltransferase H from Pseudomonas putida (strain W619).